The following is a 73-amino-acid chain: Large ribosomal subunit protein bL31 (73 aa).

It belongs to the bacterial ribosomal protein bL31 family. Type A subfamily. As to quaternary structure, part of the 50S ribosomal subunit.

Functionally, binds the 23S rRNA. This chain is Large ribosomal subunit protein bL31, found in Rhizobium etli (strain CIAT 652).